The following is a 130-amino-acid chain: UPF0251 protein Mevan_1492 (130 aa).

Belongs to the UPF0251 family.

The polypeptide is UPF0251 protein Mevan_1492 (Methanococcus vannielii (strain ATCC 35089 / DSM 1224 / JCM 13029 / OCM 148 / SB)).